We begin with the raw amino-acid sequence, 166 residues long: Bacterial non-heme ferritin (166 aa).

In terms of domain architecture, Ferritin-like diiron spans 2–145 (LSKELLAALN…THIDYLTRIG (144 aa)). E17, E50, H53, E94, and Q127 together coordinate Fe cation.

Belongs to the ferritin family. Prokaryotic subfamily.

The protein localises to the cytoplasm. It carries out the reaction 4 Fe(2+) + O2 + 6 H2O = 4 iron(III) oxide-hydroxide + 12 H(+). Functionally, iron-storage protein. The polypeptide is Bacterial non-heme ferritin (ftnA) (Staphylococcus epidermidis (strain ATCC 12228 / FDA PCI 1200)).